We begin with the raw amino-acid sequence, 1091 residues long: Protein diaphanous (1091 aa).

The tract at residues 1 to 37 is disordered; that stretch reads MSRHEKTKSTGGGLLDSLFGRPSKSKGGTISSGTLAH. The basic region stretch occupies residues 1-56; that stretch reads MSRHEKTKSTGGGLLDSLFGRPSKSKGGTISSGTLAHGGRPVSADNYVVPGVEDFE. Residues 25 to 34 show a composition bias toward low complexity; the sequence is SKGGTISSGT. Residues 59–431 enclose the GBD/FH3 domain; it reads IQQLSVAELD…QIVFHKGYCD (373 aa). Residues 455 to 496 are a coiled coil; the sequence is KAKESKRSEEYEKKIEQLESAKQEAEAKAAHLEEKVKLMEAN. 3 disordered regions span residues 499–589, 994–1021, and 1039–1072; these read AAPS…MMMG, RLQE…DMDA, and GSAF…RTRV. Residues 512–572 show a composition bias toward pro residues; the sequence is PMPPPPPGGG…MGGPPPPPMP (61 aa). The 85-residue stretch at 512–596 folds into the FH1 domain; sequence PMPPPPPGGG…MMGPMVPVLP (85 aa). The region spanning 601–1001 is the FH2 domain; it reads PKKKWDVKNP…KRRLQEAREQ (401 aa). Basic and acidic residues predominate over residues 994–1010; sequence RLQEAREQSAREQQERQ. Positions 1022–1054 constitute a DAD domain; that stretch reads PQTQEGVMDSLLEALQTGSAFGQRNRQARRQRP.

Belongs to the formin homology family. Diaphanous subfamily. As to quaternary structure, may interact (via CBD/FH3 domain) with Rho1.

It localises to the cytoplasm. The protein resides in the cytoskeleton. Its subcellular location is the cleavage furrow. The protein localises to the apical cell membrane. Its function is as follows. Required for cytokinesis in both mitosis and meiosis. Has a role in actin cytoskeleton organization and is essential for many, if not all, actin-mediated events involving membrane invagination. May serve as a mediator between signaling molecules and actin organizers at specific phases of the cell cycle. Possible component of the contractile ring or may control its function. The chain is Protein diaphanous (dia) from Drosophila melanogaster (Fruit fly).